The following is a 295-amino-acid chain: Aspartate carbamoyltransferase catalytic subunit (295 aa).

Carbamoyl phosphate is bound by residues Arg49 and Thr50. L-aspartate is bound at residue Lys77. Carbamoyl phosphate-binding residues include Arg99, His127, and Gln130. The L-aspartate site is built by Arg161 and Arg212. Gly251 and Pro252 together coordinate carbamoyl phosphate.

Belongs to the aspartate/ornithine carbamoyltransferase superfamily. ATCase family. As to quaternary structure, heterododecamer (2C3:3R2) of six catalytic PyrB chains organized as two trimers (C3), and six regulatory PyrI chains organized as three dimers (R2).

It carries out the reaction carbamoyl phosphate + L-aspartate = N-carbamoyl-L-aspartate + phosphate + H(+). It participates in pyrimidine metabolism; UMP biosynthesis via de novo pathway; (S)-dihydroorotate from bicarbonate: step 2/3. Functionally, catalyzes the condensation of carbamoyl phosphate and aspartate to form carbamoyl aspartate and inorganic phosphate, the committed step in the de novo pyrimidine nucleotide biosynthesis pathway. The protein is Aspartate carbamoyltransferase catalytic subunit of Campylobacter jejuni subsp. jejuni serotype O:2 (strain ATCC 700819 / NCTC 11168).